A 612-amino-acid chain; its full sequence is Bifunctional 6(G)-fructosyltransferase/2,1-fructan:2,1-fructan 1-fructosyltransferase (612 aa).

At 1 to 24 the chain is on the cytoplasmic side; that stretch reads MDAQDIESRHPLIGARPRRRALRS. The chain crosses the membrane as a helical; Signal-anchor for type II membrane protein span at residues 25–45; that stretch reads LSILLAAALLLGLVLFYANGT. Over 46-612 the chain is Vacuolar; sequence GSGTAVDPVR…NSTYNDFYHF (567 aa). Residues 82–85, glutamine 101, and tryptophan 109 contribute to the substrate site; that span reads YMND. Aspartate 85 is a catalytic residue. A glycan (N-linked (GlcNAc...) asparagine) is linked at asparagine 111. Substrate is bound by residues 144–145 and 208–209; these read WT and RD. N-linked (GlcNAc...) asparagine glycans are attached at residues asparagine 216 and asparagine 230. Substrate is bound at residue glutamate 267. The N-linked (GlcNAc...) asparagine glycan is linked to asparagine 465. A disulfide bridge links cysteine 466 with cysteine 514. 2 N-linked (GlcNAc...) asparagine glycosylation sites follow: asparagine 586 and asparagine 603.

The protein belongs to the glycosyl hydrolase 32 family. In terms of processing, might be processed in two N-terminal and C-terminal proteolytic fragments.

The protein localises to the vacuole membrane. The catalysed reaction is [1-beta-D-fructofuranosyl-(2-&gt;1)-]m+1 alpha-D-glucopyranoside + [1-beta-D-fructofuranosyl-(2-&gt;1)-]n+1 alpha-D-glucopyranoside = [1-beta-D-fructofuranosyl-(2-&gt;1)-]m alpha-D-glucopyranoside + [1-beta-D-fructofuranosyl-(2-&gt;1)-]n+1 beta-D-fructofuranosyl-(2-&gt;6)-alpha-D-glucopyranoside (m &gt; 0, n &gt;= 0).. It catalyses the reaction [beta-D-fructosyl-(2-&gt;1)-]m + [beta-D-fructosyl-(2-&gt;1)-]n = [beta-D-fructosyl-(2-&gt;1)-]m-1 + [beta-D-fructosyl-(2-&gt;1)-]n+1.. Functionally, involved in the synthesis of fructan of the inulin neoseries. Catalyzes a self-transfer between identical oligosaccharides of the 1-kestose series. The protein is Bifunctional 6(G)-fructosyltransferase/2,1-fructan:2,1-fructan 1-fructosyltransferase of Allium cepa (Onion).